We begin with the raw amino-acid sequence, 178 residues long: Major non-capsid protein (178 aa).

This sequence belongs to the tenuiviruses NCP family.

Its subcellular location is the host cytoplasm. Functionally, induces the formation of large intracellular inclusion body, organized in amorphous and crystalline arrays. Presumably the main cause of the stripe disease observed in host. The polypeptide is Major non-capsid protein (Rice stripe virus (isolate T) (RSV)).